The sequence spans 745 residues: Phosphoribosylformylglycinamidine synthase subunit PurL (745 aa).

H47 is an active-site residue. Y50 and K90 together coordinate ATP. E92 contacts Mg(2+). Residues 93–96 and R115 each bind substrate; that span reads SHNH. H94 functions as the Proton acceptor in the catalytic mechanism. D116 is a binding site for Mg(2+). Q240 serves as a coordination point for substrate. D268 contacts Mg(2+). 312–314 contacts substrate; the sequence is ESQ. The ATP site is built by N501 and G538. N539 is a Mg(2+) binding site. Substrate is bound at residue S541.

This sequence belongs to the FGAMS family. As to quaternary structure, monomer. Part of the FGAM synthase complex composed of 1 PurL, 1 PurQ and 2 PurS subunits.

The protein resides in the cytoplasm. It catalyses the reaction N(2)-formyl-N(1)-(5-phospho-beta-D-ribosyl)glycinamide + L-glutamine + ATP + H2O = 2-formamido-N(1)-(5-O-phospho-beta-D-ribosyl)acetamidine + L-glutamate + ADP + phosphate + H(+). The protein operates within purine metabolism; IMP biosynthesis via de novo pathway; 5-amino-1-(5-phospho-D-ribosyl)imidazole from N(2)-formyl-N(1)-(5-phospho-D-ribosyl)glycinamide: step 1/2. Functionally, part of the phosphoribosylformylglycinamidine synthase complex involved in the purines biosynthetic pathway. Catalyzes the ATP-dependent conversion of formylglycinamide ribonucleotide (FGAR) and glutamine to yield formylglycinamidine ribonucleotide (FGAM) and glutamate. The FGAM synthase complex is composed of three subunits. PurQ produces an ammonia molecule by converting glutamine to glutamate. PurL transfers the ammonia molecule to FGAR to form FGAM in an ATP-dependent manner. PurS interacts with PurQ and PurL and is thought to assist in the transfer of the ammonia molecule from PurQ to PurL. The sequence is that of Phosphoribosylformylglycinamidine synthase subunit PurL from Leptospira borgpetersenii serovar Hardjo-bovis (strain JB197).